Here is a 98-residue protein sequence, read N- to C-terminus: MARPKKCRQLSSCVPCSLFKPNGIPSVELTHIQLAADEFEALELGDVQRLSQLDAAALMGISRQTFGYLLASARKKVATAITQGQVLRLPSKTDKDLS.

Belongs to the UPF0251 family.

This is UPF0251 protein Sputcn32_0687 from Shewanella putrefaciens (strain CN-32 / ATCC BAA-453).